We begin with the raw amino-acid sequence, 373 residues long: tRNA N6-adenosine threonylcarbamoyltransferase (373 aa).

A divalent metal cation-binding residues include His133, His137, and Tyr154. Residues 154–158 (YVSGG), Asp186, Gly201, Glu205, and Asn302 contribute to the substrate site. Asp331 contributes to the a divalent metal cation binding site.

This sequence belongs to the KAE1 / TsaD family. In terms of assembly, component of the EKC/KEOPS complex composed of at least BUD32, CGI121, GON7, KAE1 and PCC1; the whole complex dimerizes. A divalent metal cation is required as a cofactor.

It localises to the cytoplasm. Its subcellular location is the nucleus. It carries out the reaction L-threonylcarbamoyladenylate + adenosine(37) in tRNA = N(6)-L-threonylcarbamoyladenosine(37) in tRNA + AMP + H(+). Component of the EKC/KEOPS complex that is required for the formation of a threonylcarbamoyl group on adenosine at position 37 (t(6)A37) in tRNAs that read codons beginning with adenine. The complex is probably involved in the transfer of the threonylcarbamoyl moiety of threonylcarbamoyl-AMP (TC-AMP) to the N6 group of A37. KAE1 likely plays a direct catalytic role in this reaction, but requires other protein(s) of the complex to fulfill this activity. The EKC/KEOPS complex also promotes both telomere uncapping and telomere elongation. The complex is required for efficient recruitment of transcriptional coactivators. The polypeptide is tRNA N6-adenosine threonylcarbamoyltransferase (Debaryomyces hansenii (strain ATCC 36239 / CBS 767 / BCRC 21394 / JCM 1990 / NBRC 0083 / IGC 2968) (Yeast)).